The sequence spans 621 residues: TOX high mobility group box family member 4 (621 aa).

Disordered regions lie at residues 153–227 and 305–333; these read LGLS…QKPV and LDPA…ASIE. Thr176 is subject to Phosphothreonine. Residues Ser178, Ser181, and Ser182 each carry the phosphoserine modification. The span at 183 to 193 shows a compositional bias: basic and acidic residues; it reads LHEDGVEDFRR. Positions 208 to 218 are enriched in basic residues; that stretch reads KQKAPKKRKKK. The Nuclear localization signal motif lies at 213–218; it reads KKRKKK. Positions 223-291 form a DNA-binding region, HMG box; the sequence is PQKPVSAYAL…EYLKALAAYK (69 aa). The segment covering 307–319 has biased composition (pro residues); sequence PAPPSQTPSPPPM. Phosphothreonine is present on Thr313. Ser315 carries the post-translational modification Phosphoserine. The span at 320–333 shows a compositional bias: low complexity; that stretch reads ATVDPASPAPASIE. Arg481 is modified (asymmetric dimethylarginine). Residues 510-525 are compositionally biased toward polar residues; sequence PTVESSPERPMNNSPE. Residues 510-529 are disordered; sequence PTVESSPERPMNNSPEAHTV. Phosphoserine is present on residues Ser533, Ser550, Ser552, Ser560, Ser562, and Ser567.

As to quaternary structure, component of the PNUTS-PP1 phosphatase complex, composed of PPP1R10/PNUTS, TOX4, WDR82 and PPP1CA or PPP1CB or PPP1CC. Interacts with PPP1R10/PNUTS. Interacts with FOXO1 and CREB1 (increased by cAMP); FOXO1 and CREB1 are required for full induction of TOX4-dependent activity and the interactions are inhibited by insulin. In terms of tissue distribution, expressed in liver (at protein level).

It is found in the nucleus. It localises to the chromosome. In liver, recruited to target gene promoters following treatment with dexamethasone and cAMP. Binding is decreased in presence of insulin. Transcription factor that modulates cell fate reprogramming from the somatic state to the pluripotent and neuronal fate. In liver, controls the expression of hormone-regulated gluconeogenic genes such as G6PC1 and PCK1. This regulation is independent of the insulin receptor activation. Also acts as a regulatory component of protein phosphatase 1 (PP1) complexes. Component of the PNUTS-PP1 protein phosphatase complex, a PP1 complex that regulates RNA polymerase II transcription pause-release. PNUTS-PP1 also plays a role in the control of chromatin structure and cell cycle progression during the transition from mitosis into interphase. The chain is TOX high mobility group box family member 4 from Homo sapiens (Human).